We begin with the raw amino-acid sequence, 260 residues long: ARL14 effector protein (260 aa).

Met1 bears the N-acetylmethionine mark. Residue Lys177 forms a Glycyl lysine isopeptide (Lys-Gly) (interchain with G-Cter in SUMO2) linkage. At Ser183 the chain carries Phosphoserine.

As to quaternary structure, interacts with ARL14 and MYO1E.

The protein localises to the cytoplasm. In terms of biological role, through its interaction with ARL14 and MYO1E, may connect MHC class II-containing cytoplasmic vesicles to the actin network and hence controls the movement of these vesicles along the actin cytoskeleton in dendritic cells. This is ARL14 effector protein (ARL14EP) from Bos taurus (Bovine).